Consider the following 83-residue polypeptide: Cardiotoxin 7a (83 aa).

Positions 1–21 (MKTLLLTLVVVTIVCLDLGYT) are cleaved as a signal peptide. Intrachain disulfides connect C24/C43, C36/C61, C65/C76, and C77/C82.

This sequence belongs to the three-finger toxin family. Short-chain subfamily. Orphan group XV sub-subfamily. In terms of tissue distribution, expressed by the venom gland.

The protein localises to the secreted. It localises to the target cell membrane. In terms of biological role, has low cytotoxic activity. The protein is Cardiotoxin 7a of Naja atra (Chinese cobra).